The chain runs to 134 residues: U-scoloptoxin(05)-Er2a (134 aa).

The first 19 residues, 1–19 (MTFVVAAVVLLTVVPLATP), serve as a signal peptide directing secretion.

Belongs to the scoloptoxin-05 family. Post-translationally, contains 5 disulfide bonds. In terms of tissue distribution, expressed by the venom gland.

The protein localises to the secreted. The sequence is that of U-scoloptoxin(05)-Er2a from Ethmostigmus rubripes (Giant centipede).